The sequence spans 179 residues: Large ribosomal subunit protein uL6 (179 aa).

The protein belongs to the universal ribosomal protein uL6 family. In terms of assembly, part of the 50S ribosomal subunit.

Its function is as follows. This protein binds to the 23S rRNA, and is important in its secondary structure. It is located near the subunit interface in the base of the L7/L12 stalk, and near the tRNA binding site of the peptidyltransferase center. This chain is Large ribosomal subunit protein uL6, found in Prochlorococcus marinus (strain MIT 9211).